Consider the following 690-residue polypeptide: MSSKGDLSRCRNIGIMAHIDAGKTTTTERILFYTGKQNRIGEVHEGAASMDWMEQERERGITITSAATTCFWNDCRINIIDTPGHVDFTIEVERSLRVLDGAVAVFDGVAGVEPQSETVWRQADKYDVPRICFVNKMDRIGADFYACVDMIKDRLGAVPLVLQLPIGVDKSFVGVVDLVEMRSITWEEDSLGAKFNYGEIPSDLMEKAQDYRARLIESAVEMNDEAMNLYLDGGEISVPLLKSCIRSGVIGAKFVPVLCGSAFKNKGVQPLLDAVVDFLPSPSDVPTIEGASASDPQKAVTIKSSVDDKFVALAFKVMVDRFVGSLTFIRVYSGKLTGKSVVLNSAKGATESVGRILRMHANNREDISEIQAGDIAALAGLKKTTTGDTLCDQNFPVVLEKMDFPESVMEIAVEPVSTADQEKMGTALSRLVAEDPSLKVCVNSESGQTILKGMGELHLEIIVDRMKREFGVEASVGAPQVAYRETITKSAEIEYVHKKQTGGAGQFAKVNILFEPLPPGSGFEFENKITCGAIPKEYIPGVQSGLELVKETGMIAGFPVIDFKATLFDGAFHEVDSSPLAFELAAKGAFREMANKAGPVLLEPIMRVEIITPDEYMGDVIGDVNSRRGRVAEMQDRHNAKLITAFIPLGKMFGYVKDLRSMSQGRAQYSMYFARYERVPENAVDNVMKK.

In terms of domain architecture, tr-type G spans 8–283 (SRCRNIGIMA…AVVDFLPSPS (276 aa)). Residues 17–24 (AHIDAGKT), 81–85 (DTPGH), and 135–138 (NKMD) contribute to the GTP site.

This sequence belongs to the TRAFAC class translation factor GTPase superfamily. Classic translation factor GTPase family. EF-G/EF-2 subfamily.

The protein localises to the cytoplasm. Functionally, catalyzes the GTP-dependent ribosomal translocation step during translation elongation. During this step, the ribosome changes from the pre-translocational (PRE) to the post-translocational (POST) state as the newly formed A-site-bound peptidyl-tRNA and P-site-bound deacylated tRNA move to the P and E sites, respectively. Catalyzes the coordinated movement of the two tRNA molecules, the mRNA and conformational changes in the ribosome. This chain is Elongation factor G, found in Anaplasma marginale (strain Florida).